A 178-amino-acid polypeptide reads, in one-letter code: DELTA-miturgitoxin-Cp3a (178 aa).

An N-terminal signal peptide occupies residues 1-18; that stretch reads MKALYLLGLLAFLYSCSS. Residues 19-46 constitute a propeptide that is removed on maturation; sequence ENVYDLQPESSEEENPGTFLEAIQEQSR. The Processing quadruplet motif signature appears at 43 to 46; the sequence is EQSR. 8 disulfide bridges follow: Cys48-Cys63, Cys55-Cys72, Cys62-Cys86, Cys74-Cys84, Cys113-Cys128, Cys120-Cys137, Cys127-Cys155, and Cys139-Cys153.

The protein belongs to the spider toxin CSTX family. Double-CSTX subfamily. Cleavage of the propeptide depends on the processing quadruplet motif (XXXR, with at least one of X being E). In terms of tissue distribution, expressed by the venom gland.

The protein localises to the secreted. Spider venom toxin that exhibits cytolytic activity by forming an alpha-helix across the membrane. Lethal to insect larvae. This chain is DELTA-miturgitoxin-Cp3a, found in Cheiracanthium punctorium (Yellow sac spider).